Reading from the N-terminus, the 229-residue chain is Phosphatidylinositol N-acetylglucosaminyltransferase subunit GPI15 (229 aa).

The next 2 helical transmembrane spans lie at 59–79 and 101–121; these read IQYH…VICL and ILII…GPSV.

The protein belongs to the PIGH family. As to quaternary structure, component of the phosphatidylinositol N-acetylglucosaminyltransferase (GPI-GlcNAc transferase) complex composed of at least GPI1, GPI2, GPI3, GPI15, GPI19 and ERI1.

The protein resides in the membrane. The enzyme catalyses a 1,2-diacyl-sn-glycero-3-phospho-(1D-myo-inositol) + UDP-N-acetyl-alpha-D-glucosamine = a 6-(N-acetyl-alpha-D-glucosaminyl)-1-(1,2-diacyl-sn-glycero-3-phospho)-1D-myo-inositol + UDP + H(+). It participates in glycolipid biosynthesis; glycosylphosphatidylinositol-anchor biosynthesis. In terms of biological role, part of the complex catalyzing the transfer of N-acetylglucosamine from UDP-N-acetylglucosamine to phosphatidylinositol, the first step of GPI biosynthesis. This Saccharomyces cerevisiae (strain ATCC 204508 / S288c) (Baker's yeast) protein is Phosphatidylinositol N-acetylglucosaminyltransferase subunit GPI15 (GPI15).